The chain runs to 566 residues: DBIRD complex subunit ZNF326 (566 aa).

Disordered stretches follow at residues His-19–Asp-81 and Arg-145–Thr-180. The segment covering Ser-59–Arg-73 has biased composition (gly residues). The span at Ser-156–Ser-165 shows a compositional bias: low complexity. The short motif at Lys-240–Lys-263 is the Bipartite nuclear localization signal element. The interval Phe-314–Glu-347 is disordered. The span at Ser-317–Arg-335 shows a compositional bias: basic and acidic residues. 2 C2H2 AKAP95-type zinc fingers span residues Cys-359–His-381 and Cys-452–His-475. Residues Pro-516 to Asn-566 are disordered. The segment covering Gln-527–Thr-556 has biased composition (acidic residues).

This sequence belongs to the AKAP95 family. Component of the DBIRD complex.

The protein resides in the nucleus. Functionally, core component of the DBIRD complex, a multiprotein complex that acts at the interface between core mRNP particles and RNA polymerase II (RNAPII) and integrates transcript elongation with the regulation of alternative splicing. This chain is DBIRD complex subunit ZNF326 (ZNF326), found in Gallus gallus (Chicken).